The primary structure comprises 130 residues: C-X-C motif chemokine 5 (130 aa).

Positions 1 to 37 are cleaved as a signal peptide; it reads MSFQLRSSARIPSRSCSSFTLLAFLLLFTLPQHRAQA. Cystine bridges form between cysteine 50/cysteine 76 and cysteine 52/cysteine 93.

This sequence belongs to the intercrine alpha (chemokine CxC) family. As to quaternary structure, monomer. Homodimer.

The protein localises to the secreted. May participate in the recruitment of inflammatory cells by injured or infected tissue. This chain is C-X-C motif chemokine 5 (Cxcl5), found in Rattus norvegicus (Rat).